Reading from the N-terminus, the 549-residue chain is Mitogen-activated protein kinase 15 (549 aa).

Positions 1-20 (MCAAEVDRHVAQRYLIKRRL) are ubiquitin-conjugating. The Protein kinase domain maps to 14–305 (YLIKRRLGKG…AEQALQHPYV (292 aa)). Residues 20 to 28 (LGKGAYGIV) and Lys-43 contribute to the ATP site. Asp-138 serves as the catalytic Proton acceptor. Thr-176 carries the post-translational modification Phosphothreonine. A TXY motif is present at residues 176–178 (TEY). Position 178 is a phosphotyrosine (Tyr-178). Residues 266–286 (LDALLPPDTPPEALDLLKRLL) form a necessary to interact with ESRRA, to regulate its subcellular localization and to inhibit its transcriptional activity region. The segment at 301–382 (QHPYVQRFHC…ARTQSLKSGV (82 aa)) is requires for interaction with GABARAP, MAP1LC3B AND GABARAPL1. Positions 370 to 507 (ASPARTQSLK…PEPRPGRRMF (138 aa)) are disordered. 2 PXXXP motif repeats span residues 380–384 (SGVLP) and 387–391 (PAETP). PXXXP motif; regulates binding with chromatin and interaction with PCNA repeat units lie at residues 395-399 (RGPKP) and 403-407 (PGHDP). Over residues 403-416 (PGHDPEHVEVRRQS) the composition is skewed to basic and acidic residues. At Arg-451 the chain carries Omega-N-methylarginine. Positions 456 to 467 (SLTSQAEAQAAN) are enriched in polar residues. Positions 483-492 (AVGARRVPSR) are enriched in low complexity. Residues 493 to 502 (LPREAPEPRP) show a composition bias toward basic and acidic residues.

Belongs to the protein kinase superfamily. CMGC Ser/Thr protein kinase family. MAP kinase subfamily. Interacts with TGFB1I1. Interacts with CSK/c-Src, ABL1 and RET. Interacts with GABARAP, MAP1LC3B and GABARAPL1; controls, in a kinase-dependent fashion, both basal and starvation-induced autophagy. Interacts with ESRRA; promotes re-localization of ESRRA to the cytoplasm through a XPO1-dependent mechanism then inhibits ESRRA transcriptional activity. Interacts with PCNA; the interaction is chromatin binding- and kinase activity-dependent and prevents MDM2-mediated PCNA destruction by inhibiting the association of PCNA with MDM2. Interacts with DVL2. Interacts with CLIC3; MAPK15 does not phosphorylates CLIC3. Autophosphorylated on Thr-176 and Tyr-178; activates the enzyme. In terms of processing, ubiquitinated. Ubiquitination may allow its tight kinase activity regulation and rapid turnover. May be ubiquitinated by a SCF E3 ligase. As to expression, expressed at all stages of oocyte meiotic maturation.

The protein resides in the cytoplasm. It localises to the cytoskeleton. Its subcellular location is the cilium basal body. It is found in the cell junction. The protein localises to the tight junction. The protein resides in the microtubule organizing center. It localises to the centrosome. Its subcellular location is the centriole. It is found in the cytoplasmic vesicle. The protein localises to the autophagosome. The protein resides in the golgi apparatus. It localises to the nucleus. Its subcellular location is the spindle. It catalyses the reaction L-seryl-[protein] + ATP = O-phospho-L-seryl-[protein] + ADP + H(+). The catalysed reaction is L-threonyl-[protein] + ATP = O-phospho-L-threonyl-[protein] + ADP + H(+). Activated by threonine and tyrosine phosphorylation. Inhibited by dual specificity phosphatases, such as DUSP1. Phosphorylation and activation in response to DNA damaging agents, serum stimulation. Constitutively activated when phosphorylated on Tyr-178. Activity depends on the relative rates of MAPK15 autophosphorylation and dephosphorylation by PTPN1. In terms of biological role, atypical MAPK protein that regulates several process such as autophagy, ciliogenesis, protein trafficking/secretion and genome integrity, in a kinase activity-dependent manner. Controls both, basal and starvation-induced autophagy throught its interaction with GABARAP, MAP1LC3B and GABARAPL1 leading to autophagosome formation, SQSTM1 degradation and reduced MAP1LC3B inhibitory phosphorylation. Regulates primary cilium formation and the localization of ciliary proteins involved in cilium structure, transport, and signaling. Prevents the relocation of the sugar-adding enzymes from the Golgi to the endoplasmic reticulum, thereby restricting the production of sugar-coated proteins. Upon amino-acid starvation, mediates transitional endoplasmic reticulum site disassembly and inhibition of secretion. Binds to chromatin leading to MAPK15 activation and interaction with PCNA, that which protects genomic integrity by inhibiting MDM2-mediated degradation of PCNA. Regulates DA transporter (DAT) activity and protein expression via activation of RhoA. In response to H(2)O(2) treatment phosphorylates ELAVL1, thus preventing it from binding to the PDCD4 3'UTR and rendering the PDCD4 mRNA accessible to miR-21 and leading to its degradation and loss of protein expression. Also functions in a kinase activity-independent manner as a negative regulator of growth. Phosphorylates in vitro FOS and MBP. During oocyte maturation, plays a key role in the microtubule organization and meiotic cell cycle progression in oocytes, fertilized eggs, and early embryos. Interacts with ESRRA promoting its re-localization from the nucleus to the cytoplasm and then prevents its transcriptional activity. This is Mitogen-activated protein kinase 15 from Mus musculus (Mouse).